Reading from the N-terminus, the 277-residue chain is Large ribosomal subunit protein uL2 (277 aa).

Positions 215–263 (LGRKPHQRGSAMNPVDHPHGGGEGRTGAGRVPVSPWGQPAKGLKTRKKR) are disordered.

The protein belongs to the universal ribosomal protein uL2 family. Part of the 50S ribosomal subunit. Forms a bridge to the 30S subunit in the 70S ribosome.

Functionally, one of the primary rRNA binding proteins. Required for association of the 30S and 50S subunits to form the 70S ribosome, for tRNA binding and peptide bond formation. It has been suggested to have peptidyltransferase activity; this is somewhat controversial. Makes several contacts with the 16S rRNA in the 70S ribosome. The sequence is that of Large ribosomal subunit protein uL2 from Deinococcus geothermalis (strain DSM 11300 / CIP 105573 / AG-3a).